The following is a 575-amino-acid chain: Acetolactate synthase large subunit (575 aa).

Position 57 (Glu57) interacts with thiamine diphosphate. FAD is bound by residues Arg159, 265–286, and 308–327; these read HGSYAANMALVEADYIINLGSR and DIDAAELGKIVKTDIPILSD. The segment at 395-475 is thiamine pyrophosphate binding; sequence QHQMWVAQYY…IKVVLINNHS (81 aa). Positions 446 and 473 each coordinate Mg(2+).

Belongs to the TPP enzyme family. As to quaternary structure, dimer of large and small chains. Requires Mg(2+) as cofactor. The cofactor is thiamine diphosphate.

The catalysed reaction is 2 pyruvate + H(+) = (2S)-2-acetolactate + CO2. Its pathway is amino-acid biosynthesis; L-isoleucine biosynthesis; L-isoleucine from 2-oxobutanoate: step 1/4. The protein operates within amino-acid biosynthesis; L-valine biosynthesis; L-valine from pyruvate: step 1/4. The sequence is that of Acetolactate synthase large subunit (ilvB) from Lactococcus lactis subsp. lactis (strain IL1403) (Streptococcus lactis).